Reading from the N-terminus, the 102-residue chain is Co-chaperonin GroES (102 aa).

This sequence belongs to the GroES chaperonin family. In terms of assembly, heptamer of 7 subunits arranged in a ring. Interacts with the chaperonin GroEL.

It is found in the cytoplasm. In terms of biological role, together with the chaperonin GroEL, plays an essential role in assisting protein folding. The GroEL-GroES system forms a nano-cage that allows encapsulation of the non-native substrate proteins and provides a physical environment optimized to promote and accelerate protein folding. GroES binds to the apical surface of the GroEL ring, thereby capping the opening of the GroEL channel. The sequence is that of Co-chaperonin GroES from Chlamydia caviae (strain ATCC VR-813 / DSM 19441 / 03DC25 / GPIC) (Chlamydophila caviae).